The following is an 851-amino-acid chain: Venom phosphodiesterase 1 (851 aa).

The signal sequence occupies residues 1-23 (MIQQKVLFISLVAVTLGLGLGLG). SMB domains follow at residues 30–73 (PQVS…VLPT) and 74–118 (QSWS…GETS). Cystine bridges form between Cys-34–Cys-38, Cys-34–Cys-51, Cys-38–Cys-69, Cys-49–Cys-51, Cys-49–Cys-62, Cys-55–Cys-61, Cys-62–Cys-69, Cys-78–Cys-83, Cys-78–Cys-95, Cys-83–Cys-113, Cys-93–Cys-95, Cys-93–Cys-106, Cys-99–Cys-105, Cys-106–Cys-113, Cys-124–Cys-170, and Cys-132–Cys-344. Asn-39 is a glycosylation site (N-linked (GlcNAc...) asparagine). The Cell attachment site signature appears at 58-60 (RQA). Residues Asp-147 and Thr-185 each contribute to the a divalent metal cation site. Residue Thr-185 is the AMP-threonine intermediate of the active site. Residues Asn-216, Asn-259, and Asn-270 are each glycosylated (N-linked (GlcNAc...) asparagine). Lys-271 is a binding site for AMP. Residues Asp-305, His-309, Asp-352, and His-353 each contribute to the a divalent metal cation site. His-309 is a binding site for AMP. Disulfide bonds link Cys-360–Cys-457, Cys-408–Cys-793, Cys-541–Cys-599, Cys-554–Cys-654, Cys-556–Cys-639, and Cys-762–Cys-772. Residue Asn-405 is glycosylated (N-linked (GlcNAc...) asparagine). His-462 serves as a coordination point for a divalent metal cation. N-linked (GlcNAc...) asparagine glycosylation is found at Asn-512, Asn-594, Asn-674, and Asn-745.

This sequence belongs to the nucleotide pyrophosphatase/phosphodiesterase family. As to quaternary structure, monomer cleaved in two subunits; disulfide-linked. Is synthesized as a single-chain protein and is subsequently cleaved to form a two-subunit protein held together with disulfide bonds. A divalent metal cation serves as cofactor. Expressed by venom gland.

It localises to the secreted. It carries out the reaction ADP + H2O = AMP + phosphate + H(+). Hydrolyzes ADP with high activity. Shows weak or no activity on 5'-AMP, 5'-GMP, 3'-AMP, ATP, cAMP, and cGMP. Is devoid of monophosphatase and proteinase activities. Dose-dependently inhibits platelet aggregation induced by ADP and collagen. The protein is Venom phosphodiesterase 1 of Crotalus adamanteus (Eastern diamondback rattlesnake).